Here is a 500-residue protein sequence, read N- to C-terminus: Endonuclease domain-containing 1 protein (500 aa).

The N-terminal stretch at 1-21 is a signal peptide; that stretch reads MGTARWLALGSLFALAGLLEG. The tract at residues 293-323 is disordered; sequence ERMVQSQKSSSPLSSTRSKRSTLLPPEASEG. A compositionally biased stretch (low complexity) spans 297–317; sequence QSQKSSSPLSSTRSKRSTLLP. N6-acetyllysine is present on K407.

Belongs to the DNA/RNA non-specific endonuclease family. Interacts with RNF26; this interaction is important to modulate innate immune signaling through the cGAS-STING pathway.

It is found in the secreted. Its function is as follows. May act as a DNase and a RNase. Plays a role in the modulation of innate immune signaling through the cGAS-STING pathway by interacting with RNF26. This chain is Endonuclease domain-containing 1 protein (ENDOD1), found in Homo sapiens (Human).